The chain runs to 382 residues: Flap endonuclease 1 (382 aa).

The segment at 1-104 (MGILGLSKLI…GELAKRAERR (104 aa)) is N-domain. Mg(2+) is bound at residue Asp-34. 2 residues coordinate DNA: Arg-47 and Arg-70. Asp-86 is a binding site for Mg(2+). The tract at residues 95–118 (GELAKRAERREDAQKALEKATEAG) is disordered. A compositionally biased stretch (basic and acidic residues) spans 96 to 115 (ELAKRAERREDAQKALEKAT). An I-domain region spans residues 122-253 (DMDKFNRRLV…KRATELMNSY (132 aa)). Mg(2+) is bound by residues Glu-158, Glu-160, Asp-179, and Asp-181. Glu-158 is a binding site for DNA. Gly-231 and Asp-233 together coordinate DNA. Asp-233 lines the Mg(2+) pocket. Residues 336 to 344 (TQGRLDSFF) form an interaction with PCNA region. The disordered stretch occupies residues 353-382 (TTPKRKADDKNNVQQKKSKTAGNTKGKRPK). Residues 364–375 (NVQQKKSKTAGN) show a composition bias toward polar residues.

Belongs to the XPG/RAD2 endonuclease family. FEN1 subfamily. In terms of assembly, interacts with PCNA. Three molecules of FEN1 bind to one PCNA trimer with each molecule binding to one PCNA monomer. PCNA stimulates the nuclease activity without altering cleavage specificity. It depends on Mg(2+) as a cofactor. In terms of processing, phosphorylated. Phosphorylation upon DNA damage induces relocalization to the nuclear plasma.

It is found in the nucleus. The protein localises to the nucleolus. The protein resides in the nucleoplasm. Its subcellular location is the mitochondrion. In terms of biological role, structure-specific nuclease with 5'-flap endonuclease and 5'-3' exonuclease activities involved in DNA replication and repair. During DNA replication, cleaves the 5'-overhanging flap structure that is generated by displacement synthesis when DNA polymerase encounters the 5'-end of a downstream Okazaki fragment. It enters the flap from the 5'-end and then tracks to cleave the flap base, leaving a nick for ligation. Also involved in the long patch base excision repair (LP-BER) pathway, by cleaving within the apurinic/apyrimidinic (AP) site-terminated flap. Acts as a genome stabilization factor that prevents flaps from equilibrating into structures that lead to duplications and deletions. Also possesses 5'-3' exonuclease activity on nicked or gapped double-stranded DNA, and exhibits RNase H activity. Also involved in replication and repair of rDNA and in repairing mitochondrial DNA. This chain is Flap endonuclease 1, found in Glossina morsitans morsitans (Savannah tsetse fly).